A 364-amino-acid polypeptide reads, in one-letter code: DNA polymerase IV (364 aa).

Residues Ile-14–Gly-198 form the UmuC domain. 2 residues coordinate Mg(2+): Asp-18 and Asp-116. The active site involves Glu-117.

Belongs to the DNA polymerase type-Y family. In terms of assembly, monomer. Mg(2+) is required as a cofactor.

The protein localises to the cytoplasm. It carries out the reaction DNA(n) + a 2'-deoxyribonucleoside 5'-triphosphate = DNA(n+1) + diphosphate. Functionally, poorly processive, error-prone DNA polymerase involved in untargeted mutagenesis. Copies undamaged DNA at stalled replication forks, which arise in vivo from mismatched or misaligned primer ends. These misaligned primers can be extended by PolIV. Exhibits no 3'-5' exonuclease (proofreading) activity. May be involved in translesional synthesis, in conjunction with the beta clamp from PolIII. This Lactococcus lactis subsp. cremoris (strain SK11) protein is DNA polymerase IV.